A 243-amino-acid chain; its full sequence is Membrane selenoprotein (243 aa).

Positions 12 to 63 (GEDCEGGVUARPSSSSSSINNASDESTPLISKTNDEEKANIGISSTSNSPQE) are disordered. A non-standard amino acid (selenocysteine) is located at residue Sec-20. Polar residues-rich tracts occupy residues 30–43 (INNA…LISK) and 53–63 (GISSTSNSPQE). 4 consecutive transmembrane segments (helical) span residues 74–94 (ILTL…PVLI), 102–122 (VSAG…LSIL), 144–164 (IKFG…FDIL), and 199–219 (VMGW…LLVG). A non-standard amino acid (selenocysteine) is located at residue Sec-88.

Its subcellular location is the membrane. This is Membrane selenoprotein (msp) from Dictyostelium discoideum (Social amoeba).